Reading from the N-terminus, the 230-residue chain is MDLKYLNQKEAIAVDQELFNDYKFSVDQLMELAGLSCAHAVAKCFPAEKHPRILVCCGPGNNGGDGLVAARHLALMGYTPTIYYPKPTAKPLFENLSHQCQQMDICDVKECPSVESAARDYDLILDALFGFSFKPPVRADFVAVVELMQQTKLPIASVDIPSGWDVEKGKLTECDVEPALLISLTAPKLCARQFRGEHHYLGGRFVPPALQRKYELNLPVYPGNELCVKL.

Residues 11-218 (AIAVDQELFN…ALQRKYELNL (208 aa)) enclose the YjeF N-terminal domain. Position 61–65 (61–65 (NNGGD)) interacts with (6S)-NADPHX. K(+) contacts are provided by Asn62 and Asp126. (6S)-NADPHX is bound by residues 130–136 (GFSFKPP) and Asp159. Ser162 contributes to the K(+) binding site.

Belongs to the NnrE/AIBP family. The cofactor is K(+).

The catalysed reaction is (6R)-NADHX = (6S)-NADHX. It carries out the reaction (6R)-NADPHX = (6S)-NADPHX. In terms of biological role, catalyzes the epimerization of the S- and R-forms of NAD(P)HX, a damaged form of NAD(P)H that is a result of enzymatic or heat-dependent hydration. This is a prerequisite for the S-specific NAD(P)H-hydrate dehydratase to allow the repair of both epimers of NAD(P)HX. This chain is NAD(P)H-hydrate epimerase, found in Drosophila melanogaster (Fruit fly).